We begin with the raw amino-acid sequence, 454 residues long: CBL-interacting protein kinase 33 (454 aa).

The Protein kinase domain maps to 13–268; sequence YELGRTIGEG…IPEILEDEWF (256 aa). ATP is bound by residues 19 to 27 and K42; that span reads IGEGTFAKV. D136 serves as the catalytic Proton acceptor. Positions 154–183 are activation loop; that stretch reads DFGLSALSQQIKDDGLLHTTCGTPNYVAPE. Positions 305 to 329 constitute an NAF domain; that stretch reads EEPEALNAFELISMSAGLNLGNLFD. The PPI stretch occupies residues 335-364; it reads KRETRFTSKCPPKEIVRKIEEAAKPLGFDV.

This sequence belongs to the protein kinase superfamily. CAMK Ser/Thr protein kinase family. SNF1 subfamily. It depends on Mn(2+) as a cofactor.

The catalysed reaction is L-seryl-[protein] + ATP = O-phospho-L-seryl-[protein] + ADP + H(+). It catalyses the reaction L-threonyl-[protein] + ATP = O-phospho-L-threonyl-[protein] + ADP + H(+). Functionally, CIPK serine-threonine protein kinases interact with CBL proteins. Binding of a CBL protein to the regulatory NAF domain of CIPK protein lead to the activation of the kinase in a calcium-dependent manner. The sequence is that of CBL-interacting protein kinase 33 (CIPK33) from Oryza sativa subsp. japonica (Rice).